Consider the following 785-residue polypeptide: Phenylalanine--tRNA ligase beta subunit (785 aa).

Positions 39 to 147 (FPIPRGVVFA…DALPPGTPLA (109 aa)) constitute a tRNA-binding domain. Residues 399 to 474 (KPPEAIPFRP…RIQGYETIPL (76 aa)) form the B5 domain. Mg(2+) is bound by residues aspartate 452, aspartate 458, glutamate 461, and glutamate 462. An FDX-ACB domain is found at 688–780 (SRHPAAFRDL…ALRARGFGLR (93 aa)).

This sequence belongs to the phenylalanyl-tRNA synthetase beta subunit family. Type 1 subfamily. In terms of assembly, tetramer of two alpha and two beta subunits. Mg(2+) serves as cofactor.

The protein localises to the cytoplasm. The enzyme catalyses tRNA(Phe) + L-phenylalanine + ATP = L-phenylalanyl-tRNA(Phe) + AMP + diphosphate + H(+). The sequence is that of Phenylalanine--tRNA ligase beta subunit from Thermus thermophilus (strain ATCC BAA-163 / DSM 7039 / HB27).